The chain runs to 470 residues: Sorting nexin-17 (470 aa).

One can recognise a PX domain in the interval 1–109 (MHFSIPETES…SFLRRAQQET (109 aa)). Positions 36, 38, 62, and 75 each coordinate a 1,2-diacyl-sn-glycero-3-phospho-(1D-myo-inositol-3-phosphate). The Ras-associating domain maps to 115 to 206 (EEVSLEVLLS…YKIVLRKSYW (92 aa)). The FERM-like stretch occupies residues 115–432 (EEVSLEVLLS…DASRESMVKL (318 aa)). Residues 270–432 (GYLRFDACVA…DASRESMVKL (163 aa)) are PTB-like F3 module. Phosphoserine is present on residues S336, S407, S409, S415, S421, S437, and S440. Positions 400-426 (VGGTLRRSDSQQAVKSPPLLESPDASR) are disordered.

It belongs to the sorting nexin family. Monomer. Interacts with APP (via cytoplasmic YXNPXY motif). Interacts with KIF1B. Interacts with the C-termini of P-selectin, PTC, LDLR, VLDLR, LRP1 and LRP8. Interacts with KRIT1 (via N-terminus). Interacts with HRAS. Interacts with ITGB1 and ITGB5 (via NPxY motif). Interacts with CCDC22 and CCDC93; the interaction associates SNX17 with the CCC complex. Interacts (via C-terminus) with VPS26C and VPS35L; the interactions are direct and associate SNX17 with the retriever complex.

Its subcellular location is the cytoplasm. It localises to the early endosome. It is found in the cytoplasmic vesicle membrane. Functionally, critical regulator of endosomal recycling of numerous surface proteins, including integrins, signaling receptor and channels. Binds to NPxY sequences in the cytoplasmic tails of target cargos. Associates with retriever and CCC complexes to prevent lysosomal degradation and promote cell surface recycling of numerous cargos such as integrins ITGB1, ITGB5 and their associated alpha subunits. Also required for maintenance of normal cell surface levels of APP and LRP1. Interacts with membranes containing phosphatidylinositol 3-phosphate (PtdIns(3P)). This chain is Sorting nexin-17 (SNX17), found in Bos taurus (Bovine).